Here is a 316-residue protein sequence, read N- to C-terminus: ATP synthase gamma chain (316 aa).

Belongs to the ATPase gamma chain family. In terms of assembly, F-type ATPases have 2 components, CF(1) - the catalytic core - and CF(0) - the membrane proton channel. CF(1) has five subunits: alpha(3), beta(3), gamma(1), delta(1), epsilon(1). CF(0) has three main subunits: a, b and c.

The protein localises to the cellular thylakoid membrane. In terms of biological role, produces ATP from ADP in the presence of a proton gradient across the membrane. The gamma chain is believed to be important in regulating ATPase activity and the flow of protons through the CF(0) complex. The protein is ATP synthase gamma chain of Prochlorococcus marinus (strain NATL1A).